A 213-amino-acid chain; its full sequence is Probable nicotinate-nucleotide adenylyltransferase (213 aa).

Belongs to the NadD family.

It carries out the reaction nicotinate beta-D-ribonucleotide + ATP + H(+) = deamido-NAD(+) + diphosphate. The protein operates within cofactor biosynthesis; NAD(+) biosynthesis; deamido-NAD(+) from nicotinate D-ribonucleotide: step 1/1. Its function is as follows. Catalyzes the reversible adenylation of nicotinate mononucleotide (NaMN) to nicotinic acid adenine dinucleotide (NaAD). The protein is Probable nicotinate-nucleotide adenylyltransferase of Salmonella gallinarum (strain 287/91 / NCTC 13346).